Reading from the N-terminus, the 309-residue chain is Ribonuclease Z (309 aa).

Residues histidine 63, histidine 65, aspartate 67, histidine 68, histidine 141, aspartate 212, and histidine 270 each contribute to the Zn(2+) site. The Proton acceptor role is filled by aspartate 67.

Belongs to the RNase Z family. In terms of assembly, homodimer. The cofactor is Zn(2+).

It carries out the reaction Endonucleolytic cleavage of RNA, removing extra 3' nucleotides from tRNA precursor, generating 3' termini of tRNAs. A 3'-hydroxy group is left at the tRNA terminus and a 5'-phosphoryl group is left at the trailer molecule.. Zinc phosphodiesterase, which displays some tRNA 3'-processing endonuclease activity. Probably involved in tRNA maturation, by removing a 3'-trailer from precursor tRNA. The polypeptide is Ribonuclease Z (Lactobacillus delbrueckii subsp. bulgaricus (strain ATCC 11842 / DSM 20081 / BCRC 10696 / JCM 1002 / NBRC 13953 / NCIMB 11778 / NCTC 12712 / WDCM 00102 / Lb 14)).